A 2472-amino-acid polypeptide reads, in one-letter code: Spectrin alpha chain, non-erythrocytic 1 (2472 aa).

Met1 carries the N-acetylmethionine modification. Spectrin repeat units follow at residues 45 to 146 (RFQF…IKLL), 150 to 251 (KLVQ…QGKL), 256 to 358 (EVQR…ARLD), 361 to 465 (YRLQ…QYEQ), 468 to 570 (DLQL…AQLA), 574 to 676 (HLQQ…KLRE), 679 to 781 (QQQQ…QKLA), 785 to 888 (RLQQ…DLED), and 891 to 961 (QAQQ…QQVA). Ser587 is subject to Phosphoserine. Lys637 carries the N6-acetyllysine modification. At Lys803 the chain carries N6-acetyllysine. Phosphoserine occurs at positions 924, 982, 999, 1029, 1031, and 1041. One can recognise an SH3 domain in the interval 967 to 1026 (TGKELVLALYDYQEKSPREVTMKKGDILTLLNSTNKDWWKVEVNDRQGFVPAAYVKKLDP). Residues 1096-1166 (LFREANELQQ…LESEGLMAEE (71 aa)) form a Spectrin 10 repeat. Tyr1176 carries the phosphotyrosine modification. Ser1190, Ser1207, Ser1217, Ser1291, Ser1306, Ser1323, and Ser1338 each carry phosphoserine. The stretch at 1233 to 1336 (HEVQRFHRDA…RADQRKAKLG (104 aa)) is one Spectrin 11 repeat. Spectrin repeat units follow at residues 1339-1441 (HDLQ…RMML) and 1446-1549 (ELQL…KLGE). The residue at position 1519 (Lys1519) is an N6-acetyllysine. A phosphoserine mark is found at Ser1550, Ser1557, Ser1578, Ser1615, and Ser1647. Spectrin repeat units lie at residues 1552 to 1656 (TLQQ…KLKE), 1659 to 1762 (KQQN…KLSE), 1764 to 1868 (HRLH…RLEE), 1871 to 1974 (EYQQ…KLDE), 1978 to 2081 (FLQF…KLLE), 2092 to 2194 (LFLT…LELQ), and 2206 to 2310 (LRQE…NLEQ). The residue at position 2020 (Thr2020) is a Phosphothreonine. Residue Lys2052 is modified to N6-acetyllysine. Thr2066 carries the phosphothreonine modification. EF-hand domains are found at residues 2323-2358 (EALKEFSMMFKHFDKDKSGRLNHQEFKSCLRSLGYD), 2366-2401 (EPDPEFEAILDTVDPNRDGHVSLQEYMAFMISRETE), and 2404-2439 (KSSEEIESAFRALSSEGKPYVTKEELYQNLTREQAD). The Ca(2+) site is built by Asp2336, Asp2338, Ser2340, Arg2342, Glu2347, Asp2379, Asn2381, Asp2383, His2385, and Glu2390. At Lys2421 the chain carries N6-acetyllysine.

The protein belongs to the spectrin family. As to quaternary structure, like erythrocyte spectrin, the spectrin-like proteins are capable of forming dimers which can further associate to tetramers. Interacts (via C-terminal spectrin repeats) with TRPC4. Interacts with CALM and EMD. Interacts with isoform 1 of ACP1. Identified in a complex with ACTN4, CASK, IQGAP1, MAGI2, NPHS1 and SPTBN1. Interacts with SHANK3 (via ANK repeats). Interacts with CLN3; this interaction regulates the fodrin localization at the plasma membrane. Phosphorylation of Tyr-1176 decreases sensitivity to cleavage by calpain in vitro.

It is found in the cytoplasm. Its subcellular location is the cytoskeleton. The protein resides in the cell cortex. Functionally, fodrin, which seems to be involved in secretion, interacts with calmodulin in a calcium-dependent manner and is thus candidate for the calcium-dependent movement of the cytoskeleton at the membrane. The polypeptide is Spectrin alpha chain, non-erythrocytic 1 (Sptan1) (Mus musculus (Mouse)).